A 137-amino-acid polypeptide reads, in one-letter code: Large ribosomal subunit protein uL16 (137 aa).

This sequence belongs to the universal ribosomal protein uL16 family. As to quaternary structure, part of the 50S ribosomal subunit.

Functionally, binds 23S rRNA and is also seen to make contacts with the A and possibly P site tRNAs. This is Large ribosomal subunit protein uL16 from Rhodopseudomonas palustris (strain BisA53).